We begin with the raw amino-acid sequence, 374 residues long: Methionine import ATP-binding protein MetN 2 (374 aa).

The disordered stretch occupies residues methionine 1–glutamate 22. In terms of domain architecture, ABC transporter spans valine 32–leucine 271. Residue glycine 68–serine 75 coordinates ATP.

Belongs to the ABC transporter superfamily. Methionine importer (TC 3.A.1.24) family. The complex is composed of two ATP-binding proteins (MetN), two transmembrane proteins (MetI) and a solute-binding protein (MetQ).

The protein localises to the cell inner membrane. It catalyses the reaction L-methionine(out) + ATP + H2O = L-methionine(in) + ADP + phosphate + H(+). It carries out the reaction D-methionine(out) + ATP + H2O = D-methionine(in) + ADP + phosphate + H(+). Its function is as follows. Part of the ABC transporter complex MetNIQ involved in methionine import. Responsible for energy coupling to the transport system. The chain is Methionine import ATP-binding protein MetN 2 from Pseudomonas fluorescens (strain ATCC BAA-477 / NRRL B-23932 / Pf-5).